The primary structure comprises 289 residues: Protoheme IX farnesyltransferase (289 aa).

The next 9 membrane-spanning stretches (helical) occupy residues 13 to 33 (LIKP…LYLA), 40 to 60 (VFLI…SFIF), 85 to 105 (ISIP…FYML), 111 to 131 (LLTA…YTIF), 139 to 159 (NIVI…AAIG), 168 to 188 (ILFT…AIFL), 212 to 232 (SIFF…FLEP), 234 to 254 (MGLL…ILSY), and 269 to 289 (FLFS…DHMI).

The protein belongs to the UbiA prenyltransferase family. Protoheme IX farnesyltransferase subfamily.

It is found in the cell inner membrane. It carries out the reaction heme b + (2E,6E)-farnesyl diphosphate + H2O = Fe(II)-heme o + diphosphate. Its pathway is porphyrin-containing compound metabolism; heme O biosynthesis; heme O from protoheme: step 1/1. In terms of biological role, converts heme B (protoheme IX) to heme O by substitution of the vinyl group on carbon 2 of heme B porphyrin ring with a hydroxyethyl farnesyl side group. This Leptospira borgpetersenii serovar Hardjo-bovis (strain JB197) protein is Protoheme IX farnesyltransferase.